We begin with the raw amino-acid sequence, 264 residues long: Thymidylate synthase (264 aa).

A dUMP-binding site is contributed by arginine 21. Position 51 (histidine 51) interacts with (6R)-5,10-methylene-5,6,7,8-tetrahydrofolate. Residue 126–127 coordinates dUMP; it reads RR. The active-site Nucleophile is cysteine 146. DUMP-binding positions include 166–169, asparagine 177, and 207–209; these read RSCD and HLY. Aspartate 169 contributes to the (6R)-5,10-methylene-5,6,7,8-tetrahydrofolate binding site. (6R)-5,10-methylene-5,6,7,8-tetrahydrofolate is bound at residue alanine 263.

This sequence belongs to the thymidylate synthase family. Bacterial-type ThyA subfamily. In terms of assembly, homodimer.

The protein resides in the cytoplasm. The enzyme catalyses dUMP + (6R)-5,10-methylene-5,6,7,8-tetrahydrofolate = 7,8-dihydrofolate + dTMP. Its pathway is pyrimidine metabolism; dTTP biosynthesis. Catalyzes the reductive methylation of 2'-deoxyuridine-5'-monophosphate (dUMP) to 2'-deoxythymidine-5'-monophosphate (dTMP) while utilizing 5,10-methylenetetrahydrofolate (mTHF) as the methyl donor and reductant in the reaction, yielding dihydrofolate (DHF) as a by-product. This enzymatic reaction provides an intracellular de novo source of dTMP, an essential precursor for DNA biosynthesis. The polypeptide is Thymidylate synthase (Baumannia cicadellinicola subsp. Homalodisca coagulata).